Here is a 30-residue protein sequence, read N- to C-terminus: Proteinase inhibitor CeKI (30 aa).

Belongs to the protease inhibitor I3 (leguminous Kunitz-type inhibitor) family.

Its function is as follows. Potent inhibitor of serine proteases plasma kallikrein, plasmin and coagulation factor XIIa. Weak inhibitor of serine proteases trypsin and coagulation factor Xa. Does not inhibit the serine proteases chymotrypsin, elastase or thrombin. Inhibits kinin release from HMW-kininogen by kallikrein in vitro. The protein is Proteinase inhibitor CeKI of Paubrasilia echinata (Pau Brasil).